The sequence spans 127 residues: Large ribosomal subunit protein bL20 (127 aa).

Belongs to the bacterial ribosomal protein bL20 family.

Binds directly to 23S ribosomal RNA and is necessary for the in vitro assembly process of the 50S ribosomal subunit. It is not involved in the protein synthesizing functions of that subunit. This is Large ribosomal subunit protein bL20 from Corynebacterium aurimucosum (strain ATCC 700975 / DSM 44827 / CIP 107346 / CN-1) (Corynebacterium nigricans).